Here is a 68-residue protein sequence, read N- to C-terminus: Peptide Smp13 (68 aa).

A signal peptide spans 1 to 23; that stretch reads MKTQFAIFLITLVLFQMFSQSDA. Position 36 is a phenylalanine amide (Phe36). Positions 37–68 are excised as a propeptide; sequence GKRGLGDHDDLDELFDGEISQADIDFLKEIMQ.

This sequence belongs to the non-disulfide-bridged peptide (NDBP) superfamily. Short antimicrobial peptide (group 4) family. As to expression, expressed by the venom gland.

The protein localises to the secreted. In terms of biological role, peptide with unknown function. Does not show antimicrobial activity against the Gram-positive, and Gram-negative bacteria tested, as well as against the fungus C.albicans. The polypeptide is Peptide Smp13 (Scorpio palmatus (Israeli golden scorpion)).